Reading from the N-terminus, the 69-residue chain is U5-agatoxin-Ao1a (69 aa).

Positions 1 to 20 (MRTIISLLLLSAMVFAVIEA) are cleaved as a signal peptide. Positions 21–34 (ISLEEGLQLFEGER) are excised as a propeptide. Intrachain disulfides connect Cys36-Cys52 and Cys43-Cys57.

Belongs to the neurotoxin 01 (U2-agtx) family. Does not contain a cysteine at position 61 which disrupts the cysteine framework. As to expression, expressed by the venom gland.

The protein resides in the secreted. The protein is U5-agatoxin-Ao1a of Agelena orientalis (Funnel-web spider).